The chain runs to 456 residues: 26S proteasome non-ATPase regulatory subunit 12 (456 aa).

Position 2 is an N-acetylalanine (Ala-2). Residue Lys-92 forms a Glycyl lysine isopeptide (Lys-Gly) (interchain with G-Cter in SUMO1); alternate linkage. A Glycyl lysine isopeptide (Lys-Gly) (interchain with G-Cter in SUMO2); alternate cross-link involves residue Lys-92. Lys-221 and Lys-368 each carry N6-acetyllysine. Positions 242–420 (SICKHYRAIY…GIINFQRPKD (179 aa)) constitute a PCI domain.

The protein belongs to the proteasome subunit p55 family. In terms of assembly, component of the 19S proteasome regulatory particle complex. The 26S proteasome consists of a 20S core particle (CP) and two 19S regulatory subunits (RP). The regulatory particle is made of a lid composed of 9 subunits including PSMD12, a base containing 6 ATPases and few additional components. Interacts with ERCC6.

Component of the 26S proteasome, a multiprotein complex involved in the ATP-dependent degradation of ubiquitinated proteins. This complex plays a key role in the maintenance of protein homeostasis by removing misfolded or damaged proteins, which could impair cellular functions, and by removing proteins whose functions are no longer required. Therefore, the proteasome participates in numerous cellular processes, including cell cycle progression, apoptosis, or DNA damage repair. This is 26S proteasome non-ATPase regulatory subunit 12 (PSMD12) from Homo sapiens (Human).